The chain runs to 471 residues: tRNA-2-methylthio-N(6)-dimethylallyladenosine synthase (471 aa).

In terms of domain architecture, MTTase N-terminal spans 36 to 154 (KTYHIITYGC…FPQLLYKAIT (119 aa)). Positions 45, 81, 115, 191, 195, and 198 each coordinate [4Fe-4S] cluster. In terms of domain architecture, Radical SAM core spans 177-407 (RREGVSAFVN…VKLVEEIALK (231 aa)). The 62-residue stretch at 410-471 (QQMLGKVCEI…SRHWLYGEVI (62 aa)) folds into the TRAM domain.

The protein belongs to the methylthiotransferase family. MiaB subfamily. As to quaternary structure, monomer. It depends on [4Fe-4S] cluster as a cofactor.

It is found in the cytoplasm. It carries out the reaction N(6)-dimethylallyladenosine(37) in tRNA + (sulfur carrier)-SH + AH2 + 2 S-adenosyl-L-methionine = 2-methylsulfanyl-N(6)-dimethylallyladenosine(37) in tRNA + (sulfur carrier)-H + 5'-deoxyadenosine + L-methionine + A + S-adenosyl-L-homocysteine + 2 H(+). Its function is as follows. Catalyzes the methylthiolation of N6-(dimethylallyl)adenosine (i(6)A), leading to the formation of 2-methylthio-N6-(dimethylallyl)adenosine (ms(2)i(6)A) at position 37 in tRNAs that read codons beginning with uridine. In Caldicellulosiruptor saccharolyticus (strain ATCC 43494 / DSM 8903 / Tp8T 6331), this protein is tRNA-2-methylthio-N(6)-dimethylallyladenosine synthase.